Consider the following 447-residue polypeptide: Probable 3-deoxy-D-manno-octulosonic acid transferase, mitochondrial (447 aa).

Residues 1 to 32 (MKLGVFVYRLYRALTYGVSPLIHLHIRWRRLR) constitute a mitochondrion transit peptide. The Proton acceptor role is filled by Glu-66. Residues 278–279 (PR), 320–322 (LGE), and 347–350 (NLSE) contribute to the CMP site.

It belongs to the glycosyltransferase group 1 family. Glycosyltransferase 30 subfamily. Expressed in leaves, stems and flowers.

It is found in the mitochondrion. The enzyme catalyses lipid IVA (E. coli) + CMP-3-deoxy-beta-D-manno-octulosonate = alpha-Kdo-(2-&gt;6)-lipid IVA (E. coli) + CMP + H(+). It catalyses the reaction alpha-Kdo-(2-&gt;6)-lipid IVA (E. coli) + CMP-3-deoxy-beta-D-manno-octulosonate = alpha-Kdo-(2-&gt;4)-alpha-Kdo-(2-&gt;6)-lipid IVA (E. coli) + CMP + H(+). The protein operates within glycolipid biosynthesis; KDO(2)-lipid A biosynthesis; KDO(2)-lipid A from CMP-3-deoxy-D-manno-octulosonate and lipid IV(A): step 1/4. It participates in glycolipid biosynthesis; KDO(2)-lipid A biosynthesis; KDO(2)-lipid A from CMP-3-deoxy-D-manno-octulosonate and lipid IV(A): step 2/4. Involved in the biosynthesis of lipid A, a phosphorylated glycolipid that in bacteria anchors the lipopolysaccharide to the outer membrane of the cell. Catalyzes the transfer of two 3-deoxy-D-manno-octulosonate (Kdo) residues from CMP-Kdo to lipid IV(A), the tetraacyldisaccharide-1,4'-bisphosphate precursor of lipid A. Lipid A-like molecules in plants may serve as structural components of the outer membranes of mitochondria and/or chloroplasts, or may be involved in signal transduction or plant defense responses. The chain is Probable 3-deoxy-D-manno-octulosonic acid transferase, mitochondrial (KDTA) from Arabidopsis thaliana (Mouse-ear cress).